The following is a 103-amino-acid chain: Large ribosomal subunit protein eL14 (103 aa).

This sequence belongs to the eukaryotic ribosomal protein eL14 family.

This Ignicoccus hospitalis (strain KIN4/I / DSM 18386 / JCM 14125) protein is Large ribosomal subunit protein eL14.